A 229-amino-acid polypeptide reads, in one-letter code: Ribonuclease 3 (229 aa).

The region spanning Leu-5–Asp-127 is the RNase III domain. Glu-40 lines the Mg(2+) pocket. Residue Asp-44 is part of the active site. 2 residues coordinate Mg(2+): Asp-113 and Glu-116. Glu-116 is an active-site residue. The 71-residue stretch at Asp-154–Val-224 folds into the DRBM domain.

The protein belongs to the ribonuclease III family. As to quaternary structure, homodimer. It depends on Mg(2+) as a cofactor.

The protein localises to the cytoplasm. The enzyme catalyses Endonucleolytic cleavage to 5'-phosphomonoester.. In terms of biological role, digests double-stranded RNA. Involved in the processing of primary rRNA transcript to yield the immediate precursors to the large and small rRNAs (23S and 16S). Processes some mRNAs, and tRNAs when they are encoded in the rRNA operon. Processes pre-crRNA and tracrRNA of type II CRISPR loci if present in the organism. This is Ribonuclease 3 from Pseudomonas putida (strain ATCC 700007 / DSM 6899 / JCM 31910 / BCRC 17059 / LMG 24140 / F1).